The chain runs to 90 residues: Small ribosomal subunit protein bS18 (90 aa).

The segment covering 1 to 14 (MARDNGNKDRDGKR) has biased composition (basic and acidic residues). Positions 1–23 (MARDNGNKDRDGKRPNGGRNRKM) are disordered.

This sequence belongs to the bacterial ribosomal protein bS18 family. In terms of assembly, part of the 30S ribosomal subunit. Forms a tight heterodimer with protein bS6.

In terms of biological role, binds as a heterodimer with protein bS6 to the central domain of the 16S rRNA, where it helps stabilize the platform of the 30S subunit. The polypeptide is Small ribosomal subunit protein bS18 (Clostridium acetobutylicum (strain ATCC 824 / DSM 792 / JCM 1419 / IAM 19013 / LMG 5710 / NBRC 13948 / NRRL B-527 / VKM B-1787 / 2291 / W)).